Consider the following 392-residue polypeptide: ADP-ribosylhydrolase ARH1 (392 aa).

Serine 79, aspartate 80, and aspartate 81 together coordinate Mg(2+). Lysine 109 is a substrate binding site. Residues 125-127 are substrate; sequence IQT. Glycine 159 contributes to the substrate binding site. 3 substrate regions span residues 192 to 194, 309 to 311, and 315 to 316; these read HNN, FSG, and SS. 3 residues coordinate Mg(2+): aspartate 348, aspartate 350, and serine 351.

Belongs to the ADP-ribosylglycohydrolase family. Monomer. It depends on Mg(2+) as a cofactor.

The enzyme catalyses N(omega)-(ADP-D-ribosyl)-L-arginyl-[protein] + H2O = ADP-D-ribose + L-arginyl-[protein]. Specifically acts as an arginine mono-ADP-ribosylhydrolase by mediating the removal of mono-ADP-ribose attached to arginine residues on proteins. This chain is ADP-ribosylhydrolase ARH1 (adprh), found in Dictyostelium discoideum (Social amoeba).